We begin with the raw amino-acid sequence, 655 residues long: Phosphatidylinositol-3,5-bisphosphate 3-phosphatase MTMR6 (655 aa).

A GRAM domain is found at 1 to 101; it reads MEHIRTTKVE…YNSLLQLSKQ (101 aa). Positions 2–141 are interaction with RAB1B; it reads EHIRTTKVEQ…AEYERMGVPN (140 aa). Tyr-108 carries the post-translational modification Phosphotyrosine. The region spanning 124 to 537 is the Myotubularin phosphatase domain; that stretch reads GWQLIDLAAE…FNFKFWRNMY (414 aa). The a 1,2-diacyl-sn-glycero-3-phospho-(1D-myo-inositol-3,5-bisphosphate) site is built by Asn-286, Asn-311, and Ile-312. 3 residues coordinate a 1,2-diacyl-sn-glycero-3-phospho-(1D-myo-inositol-3-phosphate): Asn-286, Asn-311, and Ile-312. Catalysis depends on Cys-374, which acts as the Phosphocysteine intermediate. A 1,2-diacyl-sn-glycero-3-phospho-(1D-myo-inositol-3,5-bisphosphate) is bound by residues Ser-375, Asp-376, Gly-377, Trp-378, Asp-379, Arg-380, Lys-416, and Arg-420. Residues Ser-375, Asp-376, Gly-377, Trp-378, Asp-379, and Arg-380 each contribute to the a 1,2-diacyl-sn-glycero-3-phospho-(1D-myo-inositol-3-phosphate) site. A 1,2-diacyl-sn-glycero-3-phospho-(1D-myo-inositol-3-phosphate) is bound at residue Arg-420. Residues 547 to 581 are a coiled coil; the sequence is RQSVLNIIMNMNEQNKQLEEDVKDLEAKIKQCKSG. Phosphoserine is present on residues Ser-595, Ser-623, and Ser-645.

Belongs to the protein-tyrosine phosphatase family. Non-receptor class myotubularin subfamily. In terms of assembly, homodimer. Heterodimer (via C-terminus) with MTMR9 (via C-terminus). Interacts with ALKBH4. Interacts with KCNN4. Interacts (via GRAM domain) with RAB1B (in GDP-bound form); the interaction regulates MTMR6 recruitment to the endoplasmic reticulum-Golgi intermediate compartment.

The protein resides in the cytoplasm. It is found in the endoplasmic reticulum. It localises to the cell projection. The protein localises to the ruffle membrane. Its subcellular location is the endoplasmic reticulum-Golgi intermediate compartment. The protein resides in the perinuclear region. It catalyses the reaction a 1,2-diacyl-sn-glycero-3-phospho-(1D-myo-inositol-3,5-bisphosphate) + H2O = a 1,2-diacyl-sn-glycero-3-phospho-(1D-myo-inositol-5-phosphate) + phosphate. It carries out the reaction a 1,2-diacyl-sn-glycero-3-phospho-(1D-myo-inositol-3-phosphate) + H2O = a 1,2-diacyl-sn-glycero-3-phospho-(1D-myo-inositol) + phosphate. The enzyme catalyses 1,2-dioctanoyl-sn-glycero-3-phospho-(1D-myo-inositol-3,5-bisphosphate) + H2O = 1,2-dioctanoyl-sn-glycero-3-phospho-(1D-myo-inositol-5-phosphate) + phosphate. The catalysed reaction is 1,2-dioctanoyl-sn-glycero-3-phospho-(1-D-myo-inositol-3-phosphate) + H2O = 1,2-dioctanoyl-sn-glycero-3-phospho-(1D-myo-inositol) + phosphate. Its activity is regulated as follows. Allosterically activated by phosphatidylserine and/or phosphatidylinositol 4-phosphate (PtdIns(4)P), and phosphatidylinositol 5-phosphate (PtdIns(5)P). Interaction with MTMR9 increases catalytic activity towards phosphatidylinositol 3,5-bisphosphate. Lipid phosphatase that specifically dephosphorylates the D-3 position of phosphatidylinositol 3-phosphate and phosphatidylinositol 3,5-bisphosphate, generating phosphatidylinositol and phosphatidylinositol 5-phosphate. Binds with high affinity to phosphatidylinositol 3,5-bisphosphate (PtdIns(3,5)P2) but also to phosphatidylinositol 3-phosphate (PtdIns(3)P), phosphatidylinositol 4-phosphate (PtdIns(4)P), and phosphatidylinositol 5-phosphate (PtdIns(5)P), phosphatidic acid and phosphatidylserine. Negatively regulates ER-Golgi protein transport. Probably in association with MTMR9, plays a role in the late stages of macropinocytosis by dephosphorylating phosphatidylinositol 3-phosphate in membrane ruffles. Acts as a negative regulator of KCNN4/KCa3.1 channel activity in CD4(+) T-cells possibly by decreasing intracellular levels of phosphatidylinositol 3-phosphate. Negatively regulates proliferation of reactivated CD4(+) T-cells. In complex with MTMR9, negatively regulates DNA damage-induced apoptosis. The formation of the MTMR6-MTMR9 complex stabilizes both MTMR6 and MTMR9 protein levels. The chain is Phosphatidylinositol-3,5-bisphosphate 3-phosphatase MTMR6 from Rattus norvegicus (Rat).